The following is a 239-amino-acid chain: Hydroxyacylglutathione hydrolase (239 aa).

His54, His56, Asp58, His59, His112, Asp131, and His169 together coordinate Zn(2+).

It belongs to the metallo-beta-lactamase superfamily. Glyoxalase II family. In terms of assembly, monomer. Zn(2+) is required as a cofactor.

The catalysed reaction is an S-(2-hydroxyacyl)glutathione + H2O = a 2-hydroxy carboxylate + glutathione + H(+). Its pathway is secondary metabolite metabolism; methylglyoxal degradation; (R)-lactate from methylglyoxal: step 2/2. In terms of biological role, thiolesterase that catalyzes the hydrolysis of S-D-lactoyl-glutathione to form glutathione and D-lactic acid. This Pelagibacter ubique (strain HTCC1062) protein is Hydroxyacylglutathione hydrolase.